The primary structure comprises 190 residues: uncharacterized protein (190 aa).

This is an uncharacterized protein from Archaeoglobus fulgidus (strain ATCC 49558 / DSM 4304 / JCM 9628 / NBRC 100126 / VC-16).